A 692-amino-acid chain; its full sequence is ABC1 family protein C21C3.03, mitochondrial (692 aa).

Residues 1-91 (MISFSHWNSH…RKFTTRQKSE (91 aa)) constitute a mitochondrion transit peptide. The next 2 helical transmembrane spans lie at 96–116 (WRIL…LWIL) and 161–181 (LFII…ISFL).

The protein belongs to the protein kinase superfamily. ADCK protein kinase family.

It localises to the mitochondrion membrane. This chain is ABC1 family protein C21C3.03, mitochondrial, found in Schizosaccharomyces pombe (strain 972 / ATCC 24843) (Fission yeast).